Here is a 113-residue protein sequence, read N- to C-terminus: Integration host factor subunit alpha (113 aa).

A disordered region spans residues 87-113; the sequence is NALNGEVSDETTEGADDDDDEEGEGDE. Over residues 93 to 113 the composition is skewed to acidic residues; that stretch reads VSDETTEGADDDDDEEGEGDE.

This sequence belongs to the bacterial histone-like protein family. In terms of assembly, heterodimer of an alpha and a beta chain.

Functionally, this protein is one of the two subunits of integration host factor, a specific DNA-binding protein that functions in genetic recombination as well as in transcriptional and translational control. The chain is Integration host factor subunit alpha from Anaeromyxobacter dehalogenans (strain 2CP-1 / ATCC BAA-258).